The sequence spans 111 residues: UPF0060 membrane protein Pden_1837 (111 aa).

4 helical membrane passes run 7–27 (IAVYVLAALAEIAGCFAFWAW), 30–50 (LGKSPLWLVPGMVSLAVFAWL), 62–82 (AYAAYGGIYVTASLGWLWLTE), and 91–111 (ILGGGLCVLGAMVILAGPRAA).

It belongs to the UPF0060 family.

The protein localises to the cell inner membrane. The polypeptide is UPF0060 membrane protein Pden_1837 (Paracoccus denitrificans (strain Pd 1222)).